Consider the following 366-residue polypeptide: GTPase Obg (366 aa).

The 162-residue stretch at 1–162 (MRFVDEATIN…RRLRLELKIL (162 aa)) folds into the Obg domain. Residues 163–335 (ADAGLLGLPN…VVDAMWRLRD (173 aa)) form the OBG-type G domain. Residues 169-176 (GLPNAGKS), 194-198 (FTTLT), 218-221 (DIPG), 288-291 (NKID), and 316-318 (SAM) contribute to the GTP site. Mg(2+) contacts are provided by S176 and T196.

This sequence belongs to the TRAFAC class OBG-HflX-like GTPase superfamily. OBG GTPase family. In terms of assembly, monomer. Mg(2+) serves as cofactor.

Its subcellular location is the cytoplasm. Its function is as follows. An essential GTPase which binds GTP, GDP and possibly (p)ppGpp with moderate affinity, with high nucleotide exchange rates and a fairly low GTP hydrolysis rate. Plays a role in control of the cell cycle, stress response, ribosome biogenesis and in those bacteria that undergo differentiation, in morphogenesis control. The sequence is that of GTPase Obg from Nitratidesulfovibrio vulgaris (strain ATCC 29579 / DSM 644 / CCUG 34227 / NCIMB 8303 / VKM B-1760 / Hildenborough) (Desulfovibrio vulgaris).